The primary structure comprises 409 residues: Diels-Alderase ucsH (409 aa).

A helical membrane pass occupies residues 386-406; that stretch reads IYFFICMLLAVVTFGYINILE.

Belongs to the Diels-Alderase family.

Its subcellular location is the membrane. Its pathway is mycotoxin biosynthesis. Functionally, diels-Alderase; part of the gene cluster that mediates the biosynthesis of UCS1025A, a member of the pyrrolizidinone family that acts as a strong telomerase inhibitor and displays potent antibacterial and antitumor properties. These compounds share a hemiaminal-containing pyrrolizidinone core fused with a gamma-lactone, giving a furopyrrolizidine that is connected to a decalin fragment. The polyketide synthase module (PKS) of the PKS-NRPS ucsA is responsible for the synthesis of the polyketide backbone via the condensation of an acetyl-CoA starter unit with 6 malonyl-CoA units. The downstream nonribosomal peptide synthetase (NRPS) module then amidates the carboxyl end of the polyketide with a 2S,3S-methylproline derived from L-isoleucine by the 2-oxoglutarate-dependent dioxygenase ucsF which converts L-isoleucine to (4S,5S)-4-methylpyrroline-5-carboxylate that is further converted to 2S,3S-methylproline by the pyrroline-5-carboxylate reductase ucsG. Reductive release of the completed aminoacyl polyketide from the assembly line can form the 3-pyrrolin-2-one structure via an intramolecular Knoevenagel reaction. Because ucsA lacks a designated enoylreductase (ER) domain, the required activity is provided the enoyl reductase ucsL. This keto acyclic precursor is the substrate of the Diels-Alderase ucsH, that catalyzes the Diels-Alder cycloaddition. Oxidation of the 3S-methyl group to a carboxylate by the cytochrome P450 monooxygenase ucsK allows an oxa-Michael cyclization that might involve the reductase/dehydrogenase ucsI and which furnishes the furopyrrolizidine. The oxidase ucsJ likely plays a critical role in stereoselective reduction of the C5-C6 double bond to afford the required R-configured carboxylate group. Further enolization and oxidation at C5 by an unidentified enzyme affords the last intermediate that can undergo oxa-Michael cyclization to yield UCS1025A. This is Diels-Alderase ucsH from Acremonium sp.